The chain runs to 257 residues: UPF0246 protein Rpic_2164 (257 aa).

The protein belongs to the UPF0246 family.

This Ralstonia pickettii (strain 12J) protein is UPF0246 protein Rpic_2164.